Reading from the N-terminus, the 527-residue chain is Bifunctional purine biosynthesis protein PurH (527 aa).

An MGS-like domain is found at 1–149 (MASDFLPVRR…KNFARVAVAT (149 aa)).

The protein belongs to the PurH family.

It catalyses the reaction (6R)-10-formyltetrahydrofolate + 5-amino-1-(5-phospho-beta-D-ribosyl)imidazole-4-carboxamide = 5-formamido-1-(5-phospho-D-ribosyl)imidazole-4-carboxamide + (6S)-5,6,7,8-tetrahydrofolate. It carries out the reaction IMP + H2O = 5-formamido-1-(5-phospho-D-ribosyl)imidazole-4-carboxamide. It functions in the pathway purine metabolism; IMP biosynthesis via de novo pathway; 5-formamido-1-(5-phospho-D-ribosyl)imidazole-4-carboxamide from 5-amino-1-(5-phospho-D-ribosyl)imidazole-4-carboxamide (10-formyl THF route): step 1/1. The protein operates within purine metabolism; IMP biosynthesis via de novo pathway; IMP from 5-formamido-1-(5-phospho-D-ribosyl)imidazole-4-carboxamide: step 1/1. This Xanthomonas campestris pv. campestris (strain 8004) protein is Bifunctional purine biosynthesis protein PurH.